The primary structure comprises 505 residues: MVLITLTLVSLVVGLLYAVLVWNYDYWRKRGVPGPKPKLLCGNYPNMFTMKRHAIYDLDDIYRQYKNKYDAVGIFGSRSPQLLVINPALARRVFVSNFKNFHDNEIAKNIDEKTDFIFANNPFSLTGEKWKTRRADVTPGLTMGRIKTVYPVTNKVCQKLTEWVEKQLRLGSKDGIDAKHMSLCFTTEMVTDCVLGLGAESFSDKPTPIMSKINDLFNQPWTFVLFFILTSSFPSLSHLIKLRFVPVDVERFFVDLMGSAVETRRAQLAAGKQFERSDFLDYILQLGEKRNLDNRQLLAYSMTFLLDGFETTATVLAHILLNLGRNKEAQNLLREEIRSHLQDGTIAFEKLSDLPYLDACVQETIRLFPPGFMSNKLCTESIEIPNKEGPNFVVEKGTTVVVPHYCFMLDEEFFPNPQSFQPERFLEPDAAKTFRERGVFMGFGDGPRVCIGMRFATVQIKAAIVELISKFNVKINDKTRKDNDYEPGQIITGLRGGIWLDLEKL.

Cys450 provides a ligand contact to heme.

It belongs to the cytochrome P450 family. It depends on heme as a cofactor.

The protein resides in the endoplasmic reticulum membrane. Its subcellular location is the microsome membrane. Its function is as follows. May be involved in the metabolism of insect hormones and in the breakdown of synthetic insecticides. This chain is Probable cytochrome P450 28a5 (Cyp28a5), found in Drosophila melanogaster (Fruit fly).